The following is a 315-amino-acid chain: Voltage-dependent calcium channel gamma-3 subunit (315 aa).

4 helical membrane-spanning segments follow: residues 8–28 (IQML…TIAV), 104–124 (SSVF…CVAA), 135–155 (ILSA…GIIV), and 181–201 (FGAF…HIYI). Positions 232–253 (RRRSSSRSTEPRSRDLSPISKG) are disordered. At S248 the chain carries Phosphoserine.

This sequence belongs to the PMP-22/EMP/MP20 family. CACNG subfamily. The L-type calcium channel is composed of five subunits: alpha-1, alpha-2/delta, beta and gamma. Acts as an auxiliary subunit for AMPA-selective glutamate receptors (AMPARs). Found in a complex with GRIA1, GRIA2, GRIA3, GRIA4, CNIH2, CNIH3, CACNG2, CACNG4, CACNG5, CACNG7 and CACNG8. Interacts with AP4M1 and GRIA1; associates GRIA1 with the adaptor protein complex 4 (AP-4) to target GRIA1 to the somatodendritic compartment of neurons.

The protein resides in the membrane. Functionally, regulates the trafficking to the somatodendritic compartment and gating properties of AMPA-selective glutamate receptors (AMPARs). Promotes their targeting to the cell membrane and synapses and modulates their gating properties by slowing their rates of activation, deactivation and desensitization. Does not show subunit-specific AMPA receptor regulation and regulates all AMPAR subunits. Thought to stabilize the calcium channel in an inactivated (closed) state. The polypeptide is Voltage-dependent calcium channel gamma-3 subunit (Cacng3) (Mus musculus (Mouse)).